The primary structure comprises 261 residues: (R)-S-adenosyl-L-methionine hydrolase (261 aa).

Adenosine is bound by residues D12, D72, and N187. (R)-S-adenosyl-L-methionine is bound by residues N187, S231, and V239. V239 lines the adenosine pocket.

It belongs to the SAM hydrolase / SAM-dependent halogenase family.

The enzyme catalyses (R)-S-adenosyl-L-methionine + H2O = adenosine + L-methionine + H(+). Its activity is regulated as follows. Activity is inhibited by chloride. Its function is as follows. Catalyzes the hydrolysis of S-adenosyl-L-methionine (SAM) into adenosine and L-methionine. Is likely stereoselective, specifically hydrolyzing (R)-S-adenosyl-L-methionine ((R)-SAM), the inactive form of the ubiquitous cofactor SAM, and not the active form of SAM, (S)-S-adenosyl-L-methionine. Probaly plays a role in preventing accumulation of (R)-S-adenosyl-L-methionine in cells; maintenance of (S)-S-denosyl-L-methionine homochirality is important for cellular health given that the (R)-form is largely inactive as a methyl donor and can function as an inhibitor of methyltransferases. Shows very slow iodinase activity in vitro. The sequence is that of (R)-S-adenosyl-L-methionine hydrolase from Salinispora arenicola (strain CNS-205).